We begin with the raw amino-acid sequence, 468 residues long: Acetyl-CoA decarbonylase/synthase complex subunit gamma 2 (468 aa).

The 4Fe-4S domain occupies 1–60 (MKINSPLEAYKYLPQTNCGECGEATCMAFASKLIDRSGKPTQCPPLVKEKKFAKKLAELE). Cys18, Cys21, Cys26, and Cys43 together coordinate [4Fe-4S] cluster.

In terms of assembly, heterodimer of delta and gamma chains. The ACDS complex is made up of alpha, epsilon, beta, gamma and delta chains with a probable stoichiometry of (alpha(2)epsilon(2))(4)-beta(8)-(gamma(1)delta(1))(8). Corrinoid serves as cofactor. The cofactor is [4Fe-4S] cluster.

It carries out the reaction 5,6,7,8-tetrahydrosarcinapterin + methyl-Co(III)-[corrinoid Fe-S protein] = 5-methyltetrahydrosarcinapterin + Co(I)-[corrinoid Fe-S protein] + H(+). It functions in the pathway one-carbon metabolism; methanogenesis from acetate. Functionally, part of a complex that catalyzes the reversible cleavage of acetyl-CoA, allowing growth on acetate as sole source of carbon and energy. The sequence is that of Acetyl-CoA decarbonylase/synthase complex subunit gamma 2 from Methanosarcina thermophila.